Consider the following 81-residue polypeptide: uncharacterized protein (81 aa).

It to M.thermoautotrophicum MTH886.

This is an uncharacterized protein from Methanocaldococcus jannaschii (strain ATCC 43067 / DSM 2661 / JAL-1 / JCM 10045 / NBRC 100440) (Methanococcus jannaschii).